The primary structure comprises 626 residues: MSKQEKAISLSESAQVDQQSVQPLPNSRKVYVEGSRPDIRVPMREISLHDTPTDFGGEKNAPVLVYDTSGPYTDPNVVIDVRKGLGDVRSAWIDARGDTERLEGLSSNFGLQRLNDAELAKLRFAHVRNPRRAKAGANVSQMHYARQGIITAEMEYVAIRENMKLQEARAAGLLDQQHAGHSFGASIPKEITPEFVREEIARGRAIIPANINHTELEPMIIGRNFLVKINGNIGNSALGSSIEEEVAKLTWGIRWGSDTVMDLSTGKHIHETREWIIRNSPVPIGTVPIYQALEKVNGVAEDLTWELFRDTLIEQAEQGVDYFTIHAGVLLRYVPLTAKRVTGIVSRGGSIMAKWCLAHHKENFLYTHFDEICEIMKAYDVSFSLGDGLRPGSIADANDAAQFGELETLGELTKIAWKHDVQCMIEGPGHVPMQLIKENMDKQLECCDEAPFYTLGPLTTDIAPGYDHITSGIGAAMIGWFGCAMLCYVTPKEHLGLPNKDDVKTGIITYKIAAHAADLAKGHPGAQIRDNALSKARFEFRWEDQFNLGLDPDTARSFHDETLPKESAKVAHFCSMCGPKFCSMKITQEVREYAAKIETVDVTVEQGMREQSERFRQEGSQLYQKV.

The segment at methionine 1–serine 27 is disordered. Positions leucine 10–proline 25 are enriched in polar residues. Residues asparagine 232, methionine 261, tyrosine 290, histidine 326, serine 346–glycine 348, aspartate 387–arginine 390, and glutamate 426 contribute to the substrate site. Histidine 430 is a Zn(2+) binding site. A substrate-binding site is contributed by tyrosine 453. Histidine 494 provides a ligand contact to Zn(2+). Residues cysteine 574, cysteine 577, and cysteine 582 each coordinate [4Fe-4S] cluster.

Belongs to the ThiC family. In terms of assembly, homodimer. The cofactor is [4Fe-4S] cluster.

It catalyses the reaction 5-amino-1-(5-phospho-beta-D-ribosyl)imidazole + S-adenosyl-L-methionine = 4-amino-2-methyl-5-(phosphooxymethyl)pyrimidine + CO + 5'-deoxyadenosine + formate + L-methionine + 3 H(+). The protein operates within cofactor biosynthesis; thiamine diphosphate biosynthesis. Catalyzes the synthesis of the hydroxymethylpyrimidine phosphate (HMP-P) moiety of thiamine from aminoimidazole ribotide (AIR) in a radical S-adenosyl-L-methionine (SAM)-dependent reaction. The protein is Phosphomethylpyrimidine synthase of Pseudomonas entomophila (strain L48).